A 992-amino-acid chain; its full sequence is Presequence protease, mitochondrial (992 aa).

Residues 1-30 (MNYAKLSIAFSKKTIKTHNCRLFQRWLHVG) constitute a mitochondrion transit peptide. Zn(2+) is bound at residue His91. The active-site Proton acceptor is the Glu94. Residue His95 coordinates Zn(2+). Glu167 is an active-site residue. A Zn(2+)-binding site is contributed by Glu192.

The protein belongs to the peptidase M16 family. PreP subfamily. Monomer and homodimer; homodimerization is induced by binding of the substrate. It depends on Zn(2+) as a cofactor.

It localises to the mitochondrion intermembrane space. The protein resides in the mitochondrion matrix. Its function is as follows. Degrades mitochondrial transit peptides after their cleavage in the intermembrane space or in the matrix, and presequence peptides; clearance of these peptides is required to keep the presequence processing machinery running. Preferentially cleaves the N-terminal side of paired basic amino acid residues. Also degrades other unstructured peptides. May function as an ATP-dependent peptidase as opposed to a metalloendopeptidase. This Schizosaccharomyces pombe (strain 972 / ATCC 24843) (Fission yeast) protein is Presequence protease, mitochondrial (cym1).